The chain runs to 284 residues: 1D-myo-inositol 2-acetamido-2-deoxy-alpha-D-glucopyranoside deacetylase (284 aa).

3 residues coordinate Zn(2+): His12, Asp15, and His146.

The protein belongs to the MshB deacetylase family. Zn(2+) serves as cofactor.

It catalyses the reaction 1D-myo-inositol 2-acetamido-2-deoxy-alpha-D-glucopyranoside + H2O = 1D-myo-inositol 2-amino-2-deoxy-alpha-D-glucopyranoside + acetate. Catalyzes the deacetylation of 1D-myo-inositol 2-acetamido-2-deoxy-alpha-D-glucopyranoside (GlcNAc-Ins) in the mycothiol biosynthesis pathway. This Mycolicibacterium vanbaalenii (strain DSM 7251 / JCM 13017 / BCRC 16820 / KCTC 9966 / NRRL B-24157 / PYR-1) (Mycobacterium vanbaalenii) protein is 1D-myo-inositol 2-acetamido-2-deoxy-alpha-D-glucopyranoside deacetylase.